The sequence spans 475 residues: Ribulose bisphosphate carboxylase large chain (475 aa).

The propeptide occupies 1–2 (MS). Pro3 carries the N-acetylproline modification. Lys14 carries the N6,N6,N6-trimethyllysine modification. The substrate site is built by Asn123 and Thr173. Lys175 functions as the Proton acceptor in the catalytic mechanism. A substrate-binding site is contributed by Lys177. Lys201, Asp203, and Glu204 together coordinate Mg(2+). Lys201 carries the post-translational modification N6-carboxylysine. The active-site Proton acceptor is the His294. Residues Arg295, His327, and Ser379 each contribute to the substrate site.

It belongs to the RuBisCO large chain family. Type I subfamily. As to quaternary structure, heterohexadecamer of 8 large chains and 8 small chains; disulfide-linked. The disulfide link is formed within the large subunit homodimers. Mg(2+) serves as cofactor. Post-translationally, the disulfide bond which can form in the large chain dimeric partners within the hexadecamer appears to be associated with oxidative stress and protein turnover.

It is found in the plastid. Its subcellular location is the chloroplast. The enzyme catalyses 2 (2R)-3-phosphoglycerate + 2 H(+) = D-ribulose 1,5-bisphosphate + CO2 + H2O. It catalyses the reaction D-ribulose 1,5-bisphosphate + O2 = 2-phosphoglycolate + (2R)-3-phosphoglycerate + 2 H(+). Its function is as follows. RuBisCO catalyzes two reactions: the carboxylation of D-ribulose 1,5-bisphosphate, the primary event in carbon dioxide fixation, as well as the oxidative fragmentation of the pentose substrate in the photorespiration process. Both reactions occur simultaneously and in competition at the same active site. This chain is Ribulose bisphosphate carboxylase large chain, found in Quercus rubra (Northern red oak).